Consider the following 198-residue polypeptide: Glycerol-3-phosphate acyltransferase (198 aa).

5 consecutive transmembrane segments (helical) span residues 6–26 (MLPVALLIGYLLGSIPFGLIL), 56–78 (LAAATLLGDALKGTAAVIIAGYL), 83–101 (AAMLAGLGAFLGHLFPVWL), 113–133 (IGILIGLLWPYAIFFCLVWLA), and 154–174 (IVLWAFGHTALAALFALLTLL).

The protein belongs to the PlsY family. Probably interacts with PlsX.

It is found in the cell inner membrane. The enzyme catalyses an acyl phosphate + sn-glycerol 3-phosphate = a 1-acyl-sn-glycero-3-phosphate + phosphate. The protein operates within lipid metabolism; phospholipid metabolism. Functionally, catalyzes the transfer of an acyl group from acyl-phosphate (acyl-PO(4)) to glycerol-3-phosphate (G3P) to form lysophosphatidic acid (LPA). This enzyme utilizes acyl-phosphate as fatty acyl donor, but not acyl-CoA or acyl-ACP. This is Glycerol-3-phosphate acyltransferase from Bradyrhizobium sp. (strain ORS 278).